The following is a 353-amino-acid chain: DNA polymerase IV (353 aa).

Residues 14–198 (IIHIDMDAFF…MDISKFHGVG (185 aa)) enclose the UmuC domain. Positions 18 and 116 each coordinate Mg(2+). Glutamate 117 is an active-site residue.

Belongs to the DNA polymerase type-Y family. In terms of assembly, monomer. It depends on Mg(2+) as a cofactor.

It localises to the cytoplasm. The catalysed reaction is DNA(n) + a 2'-deoxyribonucleoside 5'-triphosphate = DNA(n+1) + diphosphate. Functionally, poorly processive, error-prone DNA polymerase involved in untargeted mutagenesis. Copies undamaged DNA at stalled replication forks, which arise in vivo from mismatched or misaligned primer ends. These misaligned primers can be extended by PolIV. Exhibits no 3'-5' exonuclease (proofreading) activity. May be involved in translesional synthesis, in conjunction with the beta clamp from PolIII. The chain is DNA polymerase IV from Streptococcus pneumoniae serotype 2 (strain D39 / NCTC 7466).